Consider the following 745-residue polypeptide: Protein transport protein SEC23 D (745 aa).

C53, C56, C73, and C76 together coordinate Zn(2+). Residues 53-76 (CENCYAYFNTYCELDQWAWNCSLC) are zinc finger-like.

This sequence belongs to the SEC23/SEC24 family. SEC24 subfamily. Component of the coat protein complex II (COPII), composed of at least five proteins: the Sec23/24 complex, the Sec13/31 complex and Sar1. In terms of tissue distribution, mostly expressed in closed floral bud, pollen and flowers, and, to a lower extent, in mature siliques, roots and leaf primordia.

Its subcellular location is the cytoplasmic vesicle. It is found in the COPII-coated vesicle membrane. It localises to the endoplasmic reticulum membrane. The protein resides in the membrane. In terms of biological role, component of the coat protein complex II (COPII) which promotes the formation of transport vesicles from the endoplasmic reticulum (ER). The coat has two main functions, the physical deformation of the endoplasmic reticulum membrane into vesicles and the selection of cargo molecules. May contribute to COPII-coated vesicles formation and ER-Golgi vesicle transport. Together with SEC23A, essential for pollen wall development and exine patterning, probably by regulating endoplasmic reticulum (ER) export of lipids and proteins (e.g. sporopollenin) necessary for pollen wall formation. Also involved in plastid physiology in anther tapetal cells. This chain is Protein transport protein SEC23 D, found in Arabidopsis thaliana (Mouse-ear cress).